Consider the following 295-residue polypeptide: Pyridoxal 5'-phosphate synthase subunit PdxS (295 aa).

Asp-25 is a D-ribose 5-phosphate binding site. Residue Lys-82 is the Schiff-base intermediate with D-ribose 5-phosphate of the active site. Gly-154 is a D-ribose 5-phosphate binding site. Arg-166 is a binding site for D-glyceraldehyde 3-phosphate. Residues Gly-215 and 236 to 237 (GS) contribute to the D-ribose 5-phosphate site.

This sequence belongs to the PdxS/SNZ family. In terms of assembly, in the presence of PdxT, forms a dodecamer of heterodimers.

The enzyme catalyses aldehydo-D-ribose 5-phosphate + D-glyceraldehyde 3-phosphate + L-glutamine = pyridoxal 5'-phosphate + L-glutamate + phosphate + 3 H2O + H(+). It participates in cofactor biosynthesis; pyridoxal 5'-phosphate biosynthesis. Functionally, catalyzes the formation of pyridoxal 5'-phosphate from ribose 5-phosphate (RBP), glyceraldehyde 3-phosphate (G3P) and ammonia. The ammonia is provided by the PdxT subunit. Can also use ribulose 5-phosphate and dihydroxyacetone phosphate as substrates, resulting from enzyme-catalyzed isomerization of RBP and G3P, respectively. The polypeptide is Pyridoxal 5'-phosphate synthase subunit PdxS (Heliobacterium modesticaldum (strain ATCC 51547 / Ice1)).